Consider the following 239-residue polypeptide: Large ribosomal subunit protein bL25 (239 aa).

The interval 211-239 is disordered; that stretch reads KGKKDKEDEEAEKGTSVASPTTATGGTKK. Polar residues predominate over residues 226–239; it reads SVASPTTATGGTKK.

This sequence belongs to the bacterial ribosomal protein bL25 family. CTC subfamily. As to quaternary structure, part of the 50S ribosomal subunit; part of the 5S rRNA/L5/L18/L25 subcomplex. Contacts the 5S rRNA. Binds to the 5S rRNA independently of L5 and L18.

This is one of the proteins that binds to the 5S RNA in the ribosome where it forms part of the central protuberance. The sequence is that of Large ribosomal subunit protein bL25 from Endomicrobium trichonymphae.